A 700-amino-acid polypeptide reads, in one-letter code: Elongation factor G (700 aa).

In terms of domain architecture, tr-type G spans 10–286 (SKVRNIGIMA…AVIDYLPSPL (277 aa)). GTP contacts are provided by residues 19 to 26 (AHIDAGKT), 83 to 87 (DTPGH), and 137 to 140 (NKMD).

The protein belongs to the TRAFAC class translation factor GTPase superfamily. Classic translation factor GTPase family. EF-G/EF-2 subfamily.

The protein localises to the cytoplasm. In terms of biological role, catalyzes the GTP-dependent ribosomal translocation step during translation elongation. During this step, the ribosome changes from the pre-translocational (PRE) to the post-translocational (POST) state as the newly formed A-site-bound peptidyl-tRNA and P-site-bound deacylated tRNA move to the P and E sites, respectively. Catalyzes the coordinated movement of the two tRNA molecules, the mRNA and conformational changes in the ribosome. The sequence is that of Elongation factor G from Mycolicibacterium gilvum (strain PYR-GCK) (Mycobacterium gilvum (strain PYR-GCK)).